The sequence spans 424 residues: Glutamyl-tRNA reductase (424 aa).

Substrate-binding positions include 49–52, serine 105, 110–112, and glutamine 116; these read TCNR and EPQ. Cysteine 50 functions as the Nucleophile in the catalytic mechanism. Position 185-190 (185-190) interacts with NADP(+); it reads GSGETA.

It belongs to the glutamyl-tRNA reductase family. In terms of assembly, homodimer.

It carries out the reaction (S)-4-amino-5-oxopentanoate + tRNA(Glu) + NADP(+) = L-glutamyl-tRNA(Glu) + NADPH + H(+). It participates in porphyrin-containing compound metabolism; protoporphyrin-IX biosynthesis; 5-aminolevulinate from L-glutamyl-tRNA(Glu): step 1/2. Catalyzes the NADPH-dependent reduction of glutamyl-tRNA(Glu) to glutamate 1-semialdehyde (GSA). This chain is Glutamyl-tRNA reductase, found in Legionella pneumophila (strain Lens).